The primary structure comprises 263 residues: N-acyl homoserine lactonase AttM (263 aa).

The Zn(2+) site is built by His-103, His-105, Asp-107, His-108, His-180, Asp-202, and His-247.

The protein belongs to the metallo-beta-lactamase superfamily. Zn(2+) serves as cofactor.

It carries out the reaction an N-acyl-L-homoserine lactone + H2O = an N-acyl-L-homoserine + H(+). This is N-acyl homoserine lactonase AttM from Rhizobium johnstonii (strain DSM 114642 / LMG 32736 / 3841) (Rhizobium leguminosarum bv. viciae).